The sequence spans 82 residues: MSTEKKQNLQDTFLNSVRKSKTPLTIFLVNGVKLQGVVSWFDNFCVLLRRDGQSQLVYKHAISTIMPAQPVQLYEPSADQDD.

The Sm domain maps to 11-71 (DTFLNSVRKS…ISTIMPAQPV (61 aa)).

It belongs to the Hfq family. In terms of assembly, homohexamer.

Its function is as follows. RNA chaperone that binds small regulatory RNA (sRNAs) and mRNAs to facilitate mRNA translational regulation in response to envelope stress, environmental stress and changes in metabolite concentrations. Also binds with high specificity to tRNAs. The chain is RNA-binding protein Hfq from Caulobacter sp. (strain K31).